Here is a 145-residue protein sequence, read N- to C-terminus: Large ribosomal subunit protein uL24 (145 aa).

Positions 108–145 (EPIQEEQQKTEETKQEIAPEEVEAKEAQDKQEVKENDQ) are disordered. The segment covering 113 to 145 (EQQKTEETKQEIAPEEVEAKEAQDKQEVKENDQ) has biased composition (basic and acidic residues).

The protein belongs to the universal ribosomal protein uL24 family. As to quaternary structure, part of the 50S ribosomal subunit.

One of two assembly initiator proteins, it binds directly to the 5'-end of the 23S rRNA, where it nucleates assembly of the 50S subunit. Functionally, located at the polypeptide exit tunnel on the outside of the subunit. The polypeptide is Large ribosomal subunit protein uL24 (rpl24) (Thermoplasma volcanium (strain ATCC 51530 / DSM 4299 / JCM 9571 / NBRC 15438 / GSS1)).